A 447-amino-acid polypeptide reads, in one-letter code: Phosphoglucosamine mutase (447 aa).

The active-site Phosphoserine intermediate is S103. Mg(2+)-binding residues include S103, D242, D244, and D246. S103 carries the phosphoserine modification.

Belongs to the phosphohexose mutase family. Mg(2+) serves as cofactor. In terms of processing, activated by phosphorylation.

The enzyme catalyses alpha-D-glucosamine 1-phosphate = D-glucosamine 6-phosphate. Its function is as follows. Catalyzes the conversion of glucosamine-6-phosphate to glucosamine-1-phosphate. This Cereibacter sphaeroides (strain ATCC 17025 / ATH 2.4.3) (Rhodobacter sphaeroides) protein is Phosphoglucosamine mutase.